A 189-amino-acid chain; its full sequence is GTPase KRas (189 aa).

Met-1 bears the N-acetylmethionine; in GTPase KRas; alternate mark. At Thr-2 the chain carries N-acetylthreonine; in GTPase KRas, N-terminally processed. GTP-binding positions include 10 to 18 (GAGGVGKSA), 29 to 35 (VDEYDPT), and 59 to 60 (AG). The short motif at 32-40 (YDPTIEDSY) is the Effector region element. (Microbial infection) O-linked (Glc) threonine; by P.sordellii toxin TcsL glycosylation occurs at Thr-35. Lys-104 carries the N6-acetyllysine modification. 116–119 (NKCD) contributes to the GTP binding site. Positions 166-185 (YRLKKISKEEKTPGCVKIKK) are hypervariable region. Residue Lys-170 forms a Glycyl lysine isopeptide (Lys-Gly) (interchain with G-Cter in ubiquitin) linkage. A lipid anchor (S-palmitoyl cysteine) is attached at Cys-180. Residues Lys-182, Lys-184, and Lys-185 are each lipidated (N6-palmitoyl lysine). A Cysteine methyl ester modification is found at Cys-186. Residue Cys-186 is the site of S-farnesyl cysteine attachment. A propeptide spans 187–189 (IIM) (removed in mature form).

The protein belongs to the small GTPase superfamily. Ras family. As to quaternary structure, interacts with PHLPP. Interacts (active GTP-bound form preferentially) with RGS14. Interacts (when farnesylated) with PDE6D; this promotes dissociation from the cell membrane. Interacts with SOS1. Interacts (when farnesylated) with GPR31. Interacts with RAP1GDS1. Interacts (active GTP-bound form) with both SHOC2 and PP1c (all isoforms) to form a tertiary complex; SHOC2 and PP1c preferably bind M-Ras/MRAS, but they also bind K-Ras/KRAS, N-Ras/NRAS and H-Ras/HRAS. Interacts (GTP-bound form) with MAPKAP1/SIN1; inhibiting K-Ras/KRAS activity. Interacts with GPR31; in a farnelysation-dependent manner. Acetylation at Lys-104 prevents interaction with guanine nucleotide exchange factors (GEFs). In terms of processing, palmitoylated at Lys-182, Lys-184 and Lys-185. Palmitoylation on lysine residues is promoted by palmitoylation at Cys-180. Lysine-depalmitoylation by SIRT2 promotes its localization to endomembranes in endocytic pathways. Post-translationally, ubiquitinated by the BCR(LZTR1) E3 ubiquitin ligase complex at Lys-170 in a non-degradative manner, leading to inhibit Ras signaling by decreasing Ras association with membranes. (Microbial infection) Glucosylated at Thr-35 by P.sordellii toxin TcsL.

The protein resides in the cell membrane. The protein localises to the endomembrane system. It is found in the cytoplasm. Its subcellular location is the cytosol. The catalysed reaction is GTP + H2O = GDP + phosphate + H(+). With respect to regulation, alternates between an inactive form bound to GDP and an active form bound to GTP. Activated by a guanine nucleotide-exchange factor (GEF) and inactivated by a GTPase-activating protein (GAP). Interaction with SOS1 promotes exchange of bound GDP to GTP. In terms of biological role, ras proteins bind GDP/GTP and possess intrinsic GTPase activity. Plays an important role in the regulation of cell proliferation. Plays a role in promoting oncogenic events by inducing transcriptional silencing of tumor suppressor genes (TSGs) in colorectal cancer (CRC) cells in a ZNF304-dependent manner. The polypeptide is GTPase KRas (KRAS) (Homo sapiens (Human)).